The following is a 565-amino-acid chain: Transcription factor asqA (565 aa).

Residues 204-273 (MDTAMAQAVR…HSMPALCIDS (70 aa)) form a fungal transcription factor domain region.

It is found in the nucleus. Transcription factor that regulates specifically the 4'-methoxyviridicatin/aspoquinolone biosynthesis cluster. In Emericella nidulans (strain FGSC A4 / ATCC 38163 / CBS 112.46 / NRRL 194 / M139) (Aspergillus nidulans), this protein is Transcription factor asqA.